The chain runs to 208 residues: Small ribosomal subunit protein uS4 (208 aa).

In terms of domain architecture, S4 RNA-binding spans 98 to 160 (RRLDNVVYRL…SKSKTRFVEI (63 aa)).

The protein belongs to the universal ribosomal protein uS4 family. As to quaternary structure, part of the 30S ribosomal subunit. Contacts protein S5. The interaction surface between S4 and S5 is involved in control of translational fidelity.

One of the primary rRNA binding proteins, it binds directly to 16S rRNA where it nucleates assembly of the body of the 30S subunit. In terms of biological role, with S5 and S12 plays an important role in translational accuracy. This is Small ribosomal subunit protein uS4 from Caldicellulosiruptor bescii (strain ATCC BAA-1888 / DSM 6725 / KCTC 15123 / Z-1320) (Anaerocellum thermophilum).